Consider the following 553-residue polypeptide: MKKGSAVIKTLRVILSALALCVATSSAHAADTKKVDVLLVGGGIMSSTLGVWLHELQPNWSMTMVERLDGVALESSNGWNNAGTGHSALAELNYTPEKADGKVDISKAIEINESFQISRQFWAWQVKQGVLKNPHSFINSTPHMSFVWGDDNVRFLKKRYEALQASPLFRGMQYSEDYDQIKQWVPLMMEGRDRNQKVAATWTPIGTDVNFGEITRQFVGYLKTQPNFTLSLSSEVREITRNADGTWHVSWVKLHSDEPPQSVDAKFVFIGAGGGALHLLQASGIPEAKDYGAFPVGGSFLVTDNPEVVKQHLAKAYGKASVGSPPMSVPHLDTRIIDGKKIILFGPFATFSTKFLKNGSYFDLAKSTNLHNVAPMMRVGVDEFPLVQYLAGQLMLTDDDRFNALKEYFPNAKKEDWRLWQAGQRVQIIKRDPVKGGVLKLGTEIVASQDGSIAGLLGASPGASTAAPIMLNLMQKVFKDKVATPEWQQKIRQIVPSYGTKLNDSPAKVVEEWTYTSDVLQLSPPPKIDLGAPSQATGNAPARPAKASADMAL.

The tract at residues Pro-524–Leu-553 is disordered.

The protein belongs to the MQO family. FAD is required as a cofactor.

The catalysed reaction is (S)-malate + a quinone = a quinol + oxaloacetate. The protein operates within carbohydrate metabolism; tricarboxylic acid cycle; oxaloacetate from (S)-malate (quinone route): step 1/1. The protein is Probable malate:quinone oxidoreductase of Burkholderia cenocepacia (strain HI2424).